A 41-amino-acid chain; its full sequence is ORF3c protein (41 aa).

May play a role in host modulation. This chain is ORF3c protein, found in Severe acute respiratory syndrome coronavirus 2 (2019-nCoV).